Consider the following 417-residue polypeptide: Serine hydroxymethyltransferase (417 aa).

Residues leucine 121 and 125-127 (GHL) contribute to the (6S)-5,6,7,8-tetrahydrofolate site. At lysine 230 the chain carries N6-(pyridoxal phosphate)lysine. Position 355–357 (355–357 (SPF)) interacts with (6S)-5,6,7,8-tetrahydrofolate.

Belongs to the SHMT family. In terms of assembly, homodimer. It depends on pyridoxal 5'-phosphate as a cofactor.

The protein localises to the cytoplasm. It carries out the reaction (6R)-5,10-methylene-5,6,7,8-tetrahydrofolate + glycine + H2O = (6S)-5,6,7,8-tetrahydrofolate + L-serine. The protein operates within one-carbon metabolism; tetrahydrofolate interconversion. Its pathway is amino-acid biosynthesis; glycine biosynthesis; glycine from L-serine: step 1/1. Its function is as follows. Catalyzes the reversible interconversion of serine and glycine with tetrahydrofolate (THF) serving as the one-carbon carrier. This reaction serves as the major source of one-carbon groups required for the biosynthesis of purines, thymidylate, methionine, and other important biomolecules. Also exhibits THF-independent aldolase activity toward beta-hydroxyamino acids, producing glycine and aldehydes, via a retro-aldol mechanism. This is Serine hydroxymethyltransferase from Marinobacter nauticus (strain ATCC 700491 / DSM 11845 / VT8) (Marinobacter aquaeolei).